We begin with the raw amino-acid sequence, 229 residues long: Mediator of RNA polymerase II transcription subunit 7 (229 aa).

It belongs to the Mediator complex subunit 7 family. In terms of assembly, component of the Mediator complex.

Its subcellular location is the nucleus. In terms of biological role, component of the Mediator complex, a coactivator involved in the regulated transcription of nearly all RNA polymerase II-dependent genes. Mediator functions as a bridge to convey information from gene-specific regulatory proteins to the basal RNA polymerase II transcription machinery. Mediator is recruited to promoters by direct interactions with regulatory proteins and serves as a scaffold for the assembly of a functional preinitiation complex with RNA polymerase II and the general transcription factors. The chain is Mediator of RNA polymerase II transcription subunit 7 (med7) from Xenopus tropicalis (Western clawed frog).